The sequence spans 364 residues: Ribosomal RNA small subunit methyltransferase H (364 aa).

S-adenosyl-L-methionine is bound by residues 55-57, Asp75, Phe101, Asp122, and Gln129; that span reads GGH. The interval 333-364 is disordered; it reads LPPGGGAGFVKAGRVPGEPVRGTRAGSKGRRR.

The protein belongs to the methyltransferase superfamily. RsmH family.

The protein localises to the cytoplasm. It carries out the reaction cytidine(1402) in 16S rRNA + S-adenosyl-L-methionine = N(4)-methylcytidine(1402) in 16S rRNA + S-adenosyl-L-homocysteine + H(+). In terms of biological role, specifically methylates the N4 position of cytidine in position 1402 (C1402) of 16S rRNA. This Bordetella bronchiseptica (strain ATCC BAA-588 / NCTC 13252 / RB50) (Alcaligenes bronchisepticus) protein is Ribosomal RNA small subunit methyltransferase H.